Consider the following 505-residue polypeptide: Deoxyguanosinetriphosphate triphosphohydrolase (505 aa).

The 208-residue stretch at 66-273 folds into the HD domain; sequence RLTHSMEVQQ…MEAADDISYC (208 aa).

The protein belongs to the dGTPase family. Type 1 subfamily. As to quaternary structure, homotetramer. Mg(2+) is required as a cofactor.

It catalyses the reaction dGTP + H2O = 2'-deoxyguanosine + triphosphate + H(+). With respect to regulation, inhibited by the action of reducing agents such as dithiothreitol and 2-mercaptoethanol. In terms of biological role, dGTPase preferentially hydrolyzes dGTP over the other canonical NTPs. The polypeptide is Deoxyguanosinetriphosphate triphosphohydrolase (Shigella boydii).